The sequence spans 267 residues: Small ribosomal subunit protein uS2 (267 aa).

A disordered region spans residues 224–267 (GRQGEDQVDEKTFEGQKSEAAEGDKKTADNSMEDIVNAVEGDNK). Residues 225–251 (RQGEDQVDEKTFEGQKSEAAEGDKKTA) are compositionally biased toward basic and acidic residues.

The protein belongs to the universal ribosomal protein uS2 family.

The sequence is that of Small ribosomal subunit protein uS2 from Levilactobacillus brevis (strain ATCC 367 / BCRC 12310 / CIP 105137 / JCM 1170 / LMG 11437 / NCIMB 947 / NCTC 947) (Lactobacillus brevis).